A 1370-amino-acid polypeptide reads, in one-letter code: Putative Polycomb group protein ASXL2 (1370 aa).

In terms of domain architecture, HTH HARE-type spans 11–86 (RTWAEAAKTV…RMGVYTLKKD (76 aa)). A disordered region spans residues 92 to 216 (KELSECSEES…DSVPAKPGQM (125 aa)). Over residues 103–120 (DGQSDSHSSDNSSSSDGG) the composition is skewed to low complexity. Positions 141–152 (PPSPPSGCPSPT) are enriched in pro residues. Serine 150 bears the Phosphoserine mark. The short motif at 178-182 (QQKKK) is the Nuclear localization signal element. Positions 186 to 198 (CRPSMSISNQHLS) are enriched in polar residues. Positions 229–338 (PDSILVNTNL…FENYYGQSSG (110 aa)) constitute a DEUBAD domain. An LXXLL motif motif is present at residues 258 to 262 (LLLLL). Disordered stretches follow at residues 340–487 (SLED…AGLQ) and 516–535 (QESLKRKSSLTDEEATSSWE). Residues 398–412 (QKEENQDEARPDSKS) are compositionally biased toward basic and acidic residues. A phosphoserine mark is found at serine 477, serine 524, serine 553, and serine 590. An Asymmetric dimethylarginine modification is found at arginine 594. Phosphoserine is present on serine 601. Residues 643 to 652 (IPGPGPGGGQ) are compositionally biased toward gly residues. Disordered stretches follow at residues 643–734 (IPGP…LASS), 805–891 (PKAG…SSIP), and 1103–1175 (GHAD…VSEQ). Polar residues-rich tracts occupy residues 719 to 734 (AQLQQTSSVPTGLASS) and 830 to 839 (MTSSPVTTAS). The segment covering 849–870 (SGTATSTGSAPSSSTLPAASSL) has biased composition (low complexity). Residues 871–891 (KTPGTSANMNGPISRTSSSIP) are compositionally biased toward polar residues. Residues 1119–1131 (DESDEDRVGDEQE) show a composition bias toward acidic residues. Phosphoserine is present on residues serine 1121 and serine 1254. The PHD-type; atypical zinc finger occupies 1332 to 1369 (PSKCYCRLKAMIMCKGCGAFCHDDCIGPSKLCVSCLVV).

The protein belongs to the Asx family. As to quaternary structure, core component of the polycomb repressive deubiquitinase (PR-DUB) complex, at least composed of BAP1, one of ASXL1, ASXL2 or (probably) ASXL3, and one of MBD5 or MBD6. Distinct combinations of ASXL and MBD proteins may preferentially bind specific histone modification marks. The PR-DUB core associates with a number of accessory proteins, including FOXK1, FOXK2, KDM1B, HCFC1 and OGT; KDM1B specifically associates with ASXL2 PR-DUB complexes. Interacts (via PHD domain) with MBD5 and MBD6 (via MBD domain); the interaction is probably direct and mediates association of MBD proteins with the PR-DUB core. Interacts with PPARA and PPARG.

The protein resides in the nucleus. Functionally, putative Polycomb group (PcG) protein. PcG proteins act by forming multiprotein complexes, which are required to maintain the transcriptionally repressive state of homeotic genes throughout development. PcG proteins are not required to initiate repression, but to maintain it during later stages of development. They probably act via methylation of histones, rendering chromatin heritably changed in its expressibility. Involved in transcriptional regulation mediated by ligand-bound nuclear hormone receptors, such as peroxisome proliferator-activated receptor gamma (PPARG). Acts as a coactivator for PPARG and enhances its adipocyte differentiation-inducing activity; the function seems to involve differential recruitment of acetylated and methylated histone H3. Non-catalytic component of the PR-DUB complex, a complex that specifically mediates deubiquitination of histone H2A monoubiquitinated at 'Lys-119' (H2AK119ub1). The PR-DUB complex is an epigenetic regulator of gene expression and acts as a transcriptional coactivator, affecting genes involved in development, cell communication, signaling, cell proliferation and cell viability. ASXL1, ASXL2 and ASXL3 function redundantly in the PR-DUB complex. The ASXL proteins are essential for chromatin recruitment and transcriptional activation of associated genes. ASXL1 and ASXL2 are important for BAP1 protein stability. The polypeptide is Putative Polycomb group protein ASXL2 (Asxl2) (Mus musculus (Mouse)).